A 540-amino-acid polypeptide reads, in one-letter code: Probable quinate permease (540 aa).

The Cytoplasmic portion of the chain corresponds to Met-1 to Tyr-22. The helical transmembrane segment at Leu-23–Gly-43 threads the bilayer. The Extracellular segment spans residues Thr-44–Ser-74. Residues Cys-75–Gly-95 form a helical membrane-spanning segment. The Cytoplasmic portion of the chain corresponds to Arg-96–Lys-97. Residues Trp-98–Asn-118 form a helical membrane-spanning segment. Residues Gly-119–Arg-130 are Extracellular-facing. Residues Val-131–Leu-151 traverse the membrane as a helical segment. Residues Ala-152–Arg-157 are Cytoplasmic-facing. The chain crosses the membrane as a helical span at residues Gly-158–Ile-178. Residues Asn-179–Trp-193 are Extracellular-facing. Residues Ile-194–Leu-214 form a helical membrane-spanning segment. Topologically, residues Arg-215–Arg-285 are cytoplasmic. A helical transmembrane segment spans residues Leu-286–Tyr-306. Topologically, residues Tyr-307–Phe-325 are extracellular. A helical membrane pass occupies residues Ser-326–Ile-346. The Cytoplasmic portion of the chain corresponds to Asp-347–Arg-352. Residues Leu-353–Ile-373 traverse the membrane as a helical segment. At Lys-374–Thr-387 the chain is on the extracellular side. A helical transmembrane segment spans residues Gly-388–Trp-408. Residues Asn-409 to Tyr-456 lie on the Cytoplasmic side of the membrane. The chain crosses the membrane as a helical span at residues Gly-457–Ile-477. Over Pro-478–Ala-540 the chain is Extracellular. The disordered stretch occupies residues Ile-519 to Ala-540. The segment covering Gly-528–Ala-540 has biased composition (basic and acidic residues).

Belongs to the major facilitator superfamily. Sugar transporter (TC 2.A.1.1) family. As to quaternary structure, interacts with creB. Ubiquitinated. Deubiquitinated by creB, probably to control its activity or amount.

Its subcellular location is the cell membrane. Its function is as follows. Integral membrane transporter that imports quinic acid to be catabolized as a carbon source. The polypeptide is Probable quinate permease (qutD) (Aspergillus clavatus (strain ATCC 1007 / CBS 513.65 / DSM 816 / NCTC 3887 / NRRL 1 / QM 1276 / 107)).